A 1638-amino-acid chain; its full sequence is Ciliary rootlet coiled-coil protein 2 (1638 aa).

Over residues 1-20 (MSSTSSNPDDGDTTEQSQLG) the composition is skewed to polar residues. 4 disordered regions span residues 1-21 (MSST…QLGL), 39-92 (REDR…REES), 396-423 (ARLR…TSLH), and 1168-1213 (TRRK…NLQE). The segment covering 67 to 82 (SSSLGEEPLSGLREPP) has biased composition (low complexity). The stretch at 85–144 (TSHAREESELLQEELTRLEDLLAQADAEREELASRCHMVSQRLQARLDTTEARLRKSELE) forms a coiled coil. Residues 406–421 (SPHQRMSPARTSSPTS) show a composition bias toward polar residues. 2 coiled-coil regions span residues 426-1234 (LQAV…VQKE) and 1281-1315 (LQEA…AEGA). Over residues 1180–1193 (RTLEAENQRKRQEV) the composition is skewed to basic and acidic residues. Disordered regions lie at residues 1338–1383 (RNLL…VPVD) and 1506–1551 (ALEE…QTTS). Over residues 1349–1371 (SPTTGSSQTRPGRQRTSPPTRSY) the composition is skewed to polar residues. 2 coiled-coil regions span residues 1412–1506 (RDNS…LRQA) and 1542–1576 (RRAL…TEQE).

This sequence belongs to the rootletin family.

This chain is Ciliary rootlet coiled-coil protein 2, found in Mus musculus (Mouse).